A 61-amino-acid chain; its full sequence is Aerolysin regulatory protein (61 aa).

Residues 1–14 show a composition bias toward basic residues; that stretch reads MMIKRHLPQPRHRE. The tract at residues 1-61 is disordered; sequence MMIKRHLPQP…GQTHTGPQIR (61 aa). Positions 51 to 61 are enriched in polar residues; the sequence is DGQTHTGPQIR.

In terms of biological role, regulation of the expression of aerolysin. The chain is Aerolysin regulatory protein (aerC) from Aeromonas sobria.